The chain runs to 788 residues: Integrin beta-6 (788 aa).

Residues 1-21 form the signal peptide; sequence MGIELLCLFFLCLGRNDHVQG. Positions 22-71 constitute a PSI domain; that stretch reads GCAVGGAETCEDCLLIGPQCAWCSQENFTHLSGVGERCDTPANLLAKGCQ. The Extracellular portion of the chain corresponds to 22–709; it reads GCAVGGAETC…KDCPKPPNIP (688 aa). 19 cysteine pairs are disulfide-bonded: cysteine 23–cysteine 41, cysteine 31–cysteine 454, cysteine 34–cysteine 59, cysteine 44–cysteine 70, cysteine 197–cysteine 204, cysteine 252–cysteine 293, cysteine 394–cysteine 406, cysteine 426–cysteine 452, cysteine 456–cysteine 476, cysteine 467–cysteine 479, cysteine 481–cysteine 490, cysteine 492–cysteine 519, cysteine 502–cysteine 517, cysteine 511–cysteine 522, cysteine 524–cysteine 537, cysteine 539–cysteine 560, cysteine 544–cysteine 558, cysteine 552–cysteine 563, and cysteine 565–cysteine 574. N-linked (GlcNAc...) asparagine glycosylation is found at asparagine 48 and asparagine 97. The 241-residue stretch at 131–371 folds into the VWFA domain; it reads YPVDLYYLMD…QLIISAYEEL (241 aa). 3 residues coordinate Mg(2+): aspartate 140, serine 142, and serine 144. Ca(2+) contacts are provided by serine 144, aspartate 147, aspartate 148, and glutamate 179. Positions 235, 237, 239, and 240 each coordinate Ca(2+). Glutamate 240 contributes to the Mg(2+) binding site. N-linked (GlcNAc...) asparagine glycosylation occurs at asparagine 260. Residues aspartate 271 and lysine 355 each contribute to the Ca(2+) site. Residue asparagine 387 is glycosylated (N-linked (GlcNAc...) asparagine). An N-linked (GlcNAc...) asparagine glycan is attached at asparagine 418. 4 consecutive I-EGF domains span residues 456–491, 492–538, 539–575, and 576–615; these read CQKEVEVNSSKCNNGNGSFQCGVCACHPGHMGHHCE, CGED…PYCQ, CDNFSCVRHKGLLCGDNGDCDCGECVCRSGWTGEYCN, and CTTSTDPCVSEDGILCSGRGDCVCGKCICTNPGASGPTCE. N-linked (GlcNAc...) asparagine glycosylation is found at asparagine 463 and asparagine 471. Asparagine 541 carries N-linked (GlcNAc...) asparagine glycosylation. Asparagine 575 carries N-linked (GlcNAc...) asparagine glycosylation. 9 cysteine pairs are disulfide-bonded: cysteine 576-cysteine 599, cysteine 583-cysteine 597, cysteine 591-cysteine 602, cysteine 604-cysteine 614, cysteine 617-cysteine 620, cysteine 624-cysteine 670, cysteine 630-cysteine 649, cysteine 633-cysteine 645, and cysteine 678-cysteine 702. Residues 710–730 traverse the membrane as a helical segment; sequence MIMLGVSLAILLIGVVLLCIW. Residues 731-758 form an interaction with HAX1 region; it reads KLLVSFHDRKEVAKFEAERSKAKWQTGT. Residues 731 to 788 are Cytoplasmic-facing; the sequence is KLLVSFHDRKEVAKFEAERSKAKWQTGTNPLYRGSTSTFKNVTYKHKEKQKVDLSTDG.

It belongs to the integrin beta chain family. As to quaternary structure, heterodimer of an alpha and a beta subunit. Interacts with FLNB. Interacts with HAX1. ITGAV:ITGB6 interacts with FBN1. ITGAV:ITGB6 interacts with TGFB1.

Its subcellular location is the cell membrane. The protein resides in the cell junction. It localises to the focal adhesion. In terms of biological role, integrin alpha-V:beta-6 (ITGAV:ITGB6) is a receptor for fibronectin and cytotactin. It recognizes the sequence R-G-D in its ligands. ITGAV:ITGB6 acts as a receptor for fibrillin-1 (FBN1) and mediates R-G-D-dependent cell adhesion to FBN1. Integrin alpha-V:beta-6 (ITGAV:ITGB6) mediates R-G-D-dependent release of transforming growth factor beta-1 (TGF-beta-1) from regulatory Latency-associated peptide (LAP), thereby playing a key role in TGF-beta-1 activation. In Bos taurus (Bovine), this protein is Integrin beta-6 (ITGB6).